A 634-amino-acid polypeptide reads, in one-letter code: uncharacterized protein (634 aa).

The signal sequence occupies residues 1-40 (MWLQQRLKGLPGLLSSSWARRLLCLLGLLVLLLWFASSGA). Over 41 to 589 (RRAAGGLHLP…DEHMAQQDPG (549 aa)) the chain is Extracellular. N-linked (GlcNAc...) asparagine glycosylation is present at Asn363. The chain crosses the membrane as a helical span at residues 590–610 (LPFLFWFSVASLITLFHLFLF). Residues 611–634 (KLIYNEYCGPGAKPLFRSKEDPSV) are Cytoplasmic-facing.

The protein resides in the membrane. This is an uncharacterized protein from Mus musculus (Mouse).